The chain runs to 320 residues: Methionyl-tRNA formyltransferase (320 aa).

111–114 serves as a coordination point for (6S)-5,6,7,8-tetrahydrofolate; the sequence is SLLP.

It belongs to the Fmt family.

It carries out the reaction L-methionyl-tRNA(fMet) + (6R)-10-formyltetrahydrofolate = N-formyl-L-methionyl-tRNA(fMet) + (6S)-5,6,7,8-tetrahydrofolate + H(+). In terms of biological role, attaches a formyl group to the free amino group of methionyl-tRNA(fMet). The formyl group appears to play a dual role in the initiator identity of N-formylmethionyl-tRNA by promoting its recognition by IF2 and preventing the misappropriation of this tRNA by the elongation apparatus. This is Methionyl-tRNA formyltransferase from Methylacidiphilum infernorum (isolate V4) (Methylokorus infernorum (strain V4)).